The sequence spans 481 residues: DNA primase DnaG (481 aa).

A Toprim domain is found at 169 to 243 (DAILVVEGRA…DVDYVARAPD (75 aa)). Residues Glu175, Asp217, and Asp219 each coordinate Mg(2+). The segment at 275-393 (RRRNKLAAQA…ARKEREPSEF (119 aa)) is disordered. Positions 281–309 (AAQAAEKQAQAEAAQKAEAPAAAAPVQPQ) are enriched in low complexity. A compositionally biased stretch (basic and acidic residues) spans 312 to 393 (YQQKEYPQRE…ARKEREPSEF (82 aa)).

It belongs to the archaeal DnaG primase family. As to quaternary structure, forms a ternary complex with MCM helicase and DNA. Component of the archaeal exosome complex. Mg(2+) serves as cofactor.

The enzyme catalyses ssDNA + n NTP = ssDNA/pppN(pN)n-1 hybrid + (n-1) diphosphate.. Functionally, RNA polymerase that catalyzes the synthesis of short RNA molecules used as primers for DNA polymerase during DNA replication. Also part of the exosome, which is a complex involved in RNA degradation. Acts as a poly(A)-binding protein that enhances the interaction between heteromeric, adenine-rich transcripts and the exosome. The chain is DNA primase DnaG from Methanocella arvoryzae (strain DSM 22066 / NBRC 105507 / MRE50).